We begin with the raw amino-acid sequence, 261 residues long: WW domain-binding protein 2 (261 aa).

Positions 1 to 84 constitute a GRAM domain; that stretch reads MALNKNHSEG…YLMKDCEIKQ (84 aa). A Phosphotyrosine modification is found at Tyr192. The PPxY motif 1 motif lies at 196 to 200; sequence PPPPY. A compositionally biased stretch (pro residues) spans 196 to 209; the sequence is PPPPYPGPMEPPVS. The segment at 196-261 is disordered; that stretch reads PPPPYPGPME…YYPPEDKKTQ (66 aa). Over residues 210 to 230 the composition is skewed to low complexity; sequence GPSAPATPAAEAKAAEAAASA. Tyr231 carries the phosphotyrosine modification. A compositionally biased stretch (pro residues) spans 245–254; the sequence is SQPPPPPYYP. The short motif at 248–252 is the PPxY motif 2 element; that stretch reads PPPPY.

As to quaternary structure, binds to the WW domain of YAP1, WWP1 and WWP2. Interacts with NEDD4. Interacts with ESR1 and UBE3A. Post-translationally, phosphorylated in repsonse to EGF as well as estrogen and progesterone hormones. Tyr-192 and Tyr-231 are phosphorylated by YES and SRC inducing nuclear translocation. As to expression, expressed in the ear and the eye. Isoform 1 is expressed in brain, inner ear and organ of Corti. Isoform 2 is only detected in brain.

The protein resides in the cytoplasm. It localises to the nucleus. Functionally, acts as a transcriptional coactivator of estrogen and progesterone receptors (ESR1 and PGR) upon hormone activation. In presence of estrogen, binds to ESR1-responsive promoters. Synergizes with YAP1 to enhance PGR activity. Modulates expression of post-synaptic scaffolding proteins via regulation of ESR1, ESR2 and PGR. The polypeptide is WW domain-binding protein 2 (Wbp2) (Mus musculus (Mouse)).